The chain runs to 1042 residues: Glutamate dehydrogenase 2 (1042 aa).

Lys-596 is a catalytic residue. Arg-763 bears the ADP-ribosylarginine; by Legionella Lart1 mark.

This sequence belongs to the Glu/Leu/Phe/Val dehydrogenases family. Homodimer. In terms of processing, (Microbial infection) ADP-ribosylated at Arg-763 by the Legionella pneumophila effector Lart1, which inhibits the glutamate dehydrogenase activity. Amoeba are natural hosts of Legionella, and ADP-ribosylation by Lart1 may promote Legionella parasitism.

The protein localises to the cytoplasm. The catalysed reaction is L-glutamate + NAD(+) + H2O = 2-oxoglutarate + NH4(+) + NADH + H(+). Activity is stimulated by AMP. Its activity is regulated as follows. (Microbial infection) Inhibited by ADP-ribosylation. The sequence is that of Glutamate dehydrogenase 2 (glud2) from Dictyostelium discoideum (Social amoeba).